The sequence spans 674 residues: Membrane-anchored lipid-binding protein LAM5 (674 aa).

Disordered regions lie at residues 1 to 52 and 65 to 151; these read MSDV…LNTE and NQSA…GSPL. Over 1-633 the chain is Cytoplasmic; the sequence is MSDVDNWEPV…AEQQGLKVTM (633 aa). Residues 69–81 show a composition bias toward basic and acidic residues; sequence ADEHPTEIKHDQS. Residues 82–119 are compositionally biased toward low complexity; that stretch reads RTSSTSSFFSGMISSFKSNVPSPVSRSTTPTSPVSQPS. Thr-110 carries the phosphothreonine modification. A phosphoserine mark is found at Ser-113 and Ser-140. Thr-143 is modified (phosphothreonine). At Ser-149 the chain carries Phosphoserine. The 67-residue stretch at 198 to 264 folds into the GRAM domain; that stretch reads KDFHETFKSV…FEDVTFMEKT (67 aa). Residues 336–357 show a composition bias toward acidic residues; the sequence is IDEENNDKDANDNDTNENDDEN. Residues 336 to 380 are disordered; the sequence is IDEENNDKDANDNDTNENDDENISTNETTPNSTSSSPDKEKEKAY. A compositionally biased stretch (low complexity) spans 358–371; it reads ISTNETTPNSTSSS. Residues 409-582 form the VASt domain; it reads NEFVLKELPF…ILSKFIKNNV (174 aa). Residues 634–654 form a helical membrane-spanning segment; the sequence is ETWLFLYLIVVVLLLFNLFYI. At 655–674 the chain is on the lumenal side; the sequence is RSIAVSLHQLVKLQLVELKL.

The protein belongs to the YSP2 family.

It is found in the endoplasmic reticulum membrane. Functionally, may be involved in sterol transfer between intracellular membranes. The polypeptide is Membrane-anchored lipid-binding protein LAM5 (Saccharomyces cerevisiae (strain ATCC 204508 / S288c) (Baker's yeast)).